The primary structure comprises 488 residues: Probable phenylalanine--tRNA ligase alpha subunit (488 aa).

The tract at residues 1-146 (MSIEQDILNL…KRKLVDINKK (146 aa)) is contains the major tRNA-Phe binding sites. L-phenylalanine-binding positions include T315, 363 to 365 (QVE), and Y403. E405 lines the Mg(2+) pocket. L-phenylalanine is bound at residue F429.

The protein belongs to the class-II aminoacyl-tRNA synthetase family. Phe-tRNA synthetase alpha subunit type 2 subfamily. In terms of assembly, tetramer of two alpha and two beta subunits. Mg(2+) serves as cofactor.

Its subcellular location is the cytoplasm. It carries out the reaction tRNA(Phe) + L-phenylalanine + ATP = L-phenylalanyl-tRNA(Phe) + AMP + diphosphate + H(+). The protein is Probable phenylalanine--tRNA ligase alpha subunit of Enterocytozoon bieneusi (strain H348) (Microsporidian parasite).